A 91-amino-acid polypeptide reads, in one-letter code: Hepcidin-1 (91 aa).

The signal sequence occupies residues 1 to 24 (MKLSNVFLAAVVILTCVCVFQITA). The propeptide occupies 25-64 (VPFIQQVQDEHHVESEELQENQHLTEAEHRQTDPLVLFRT). 4 disulfides stabilise this stretch: C73/C89, C76/C79, C77/C85, and C80/C88.

It belongs to the hepcidin family.

It is found in the secreted. Its function is as follows. Seems to act as a signaling molecule involved in the maintenance of iron homeostasis. Seems to be required in conjunction with HFE to regulate both intestinal iron absorption and iron storage in macrophages. May also have antimicrobial activity. This Danio rerio (Zebrafish) protein is Hepcidin-1 (hamp1).